We begin with the raw amino-acid sequence, 395 residues long: Cystathionine beta-lyase MetC (395 aa).

The residue at position 210 (Lys210) is an N6-(pyridoxal phosphate)lysine.

This sequence belongs to the trans-sulfuration enzymes family. In terms of assembly, homotetramer; dimer of dimers. Requires pyridoxal 5'-phosphate as cofactor.

The protein localises to the cytoplasm. It carries out the reaction L,L-cystathionine + H2O = L-homocysteine + pyruvate + NH4(+). It catalyses the reaction L-cysteine + H2O = hydrogen sulfide + pyruvate + NH4(+) + H(+). The catalysed reaction is an S-substituted L-cysteine + H2O = a thiol + pyruvate + NH4(+). It participates in amino-acid biosynthesis; L-methionine biosynthesis via de novo pathway; L-homocysteine from L-cystathionine: step 1/1. With respect to regulation, L-cysteine inhibits cystathionine beta-lyase activity competitively. Inhibited by aminoethoxyvinylglycine (AVG). Primarily catalyzes the cleavage of cystathionine to homocysteine, pyruvate and ammonia during methionine biosynthesis. Also exhibits cysteine desulfhydrase activity, producing sulfide from cysteine. In addition, under certain growth conditions, exhibits significant alanine racemase coactivity. In Escherichia coli (strain K12), this protein is Cystathionine beta-lyase MetC.